The chain runs to 274 residues: AA9 family lytic polysaccharide monooxygenase A (274 aa).

An N-terminal signal peptide occupies residues 1-22 (MHVPQFISTGALLALLARPAAA). His23 lines the Cu(2+) pocket. Cysteines 63 and 194 form a disulfide. (1,4-beta-D-glucosyl)n-binding residues include Gly67, Asp98, and Ser100. His101 is a binding site for Cu(2+). His174 provides a ligand contact to O2. Asp177 contacts (1,4-beta-D-glucosyl)n. Tyr191 contributes to the Cu(2+) binding site.

This sequence belongs to the polysaccharide monooxygenase AA9 family. The cofactor is Cu(2+).

It localises to the secreted. It carries out the reaction [(1-&gt;4)-beta-D-glucosyl]n+m + reduced acceptor + O2 = 4-dehydro-beta-D-glucosyl-[(1-&gt;4)-beta-D-glucosyl]n-1 + [(1-&gt;4)-beta-D-glucosyl]m + acceptor + H2O.. Its function is as follows. Lytic polysaccharide monooxygenase (LPMO) that depolymerizes crystalline and amorphous polysaccharides via the oxidation of scissile alpha- or beta-(1-4)-glycosidic bonds, yielding C4 oxidation products. Catalysis by LPMOs requires the reduction of the active-site copper from Cu(II) to Cu(I) by a reducing agent and H(2)O(2) or O(2) as a cosubstrate. Cleaves a range of polysaccharides, including cellulose, xyloglucan, mixed-linkage glucan and glucomannan. This is AA9 family lytic polysaccharide monooxygenase A from Collariella virescens (Soil fungus).